The primary structure comprises 253 residues: TCF3 fusion partner (253 aa).

Disordered regions lie at residues 49–72 and 142–211; these read SGGLGGSGLRERDEEEEAARGRRR and DEGS…PELA. At S167 the chain carries Phosphoserine. A compositionally biased stretch (pro residues) spans 170–181; it reads RRTPAPPEPGSP. T172 is modified (phosphothreonine). A phosphoserine mark is found at S180 and S188. A Phosphothreonine modification is found at T207. A Glycyl lysine isopeptide (Lys-Gly) (interchain with G-Cter in SUMO2) cross-link involves residue K216. The tract at residues 234–253 is disordered; it reads VSRGPDKLLPYPTLASPASD. Phosphoserine is present on residues S249 and S252.

In terms of assembly, interacts with NOL3; translocates NOL3 into the nucleus and negatively regulated TFPT-induced cell death. Component of the chromatin remodeling INO80 complex; specifically part of a complex module associated with the N-terminus of INO80.

The protein localises to the nucleus. In terms of biological role, appears to promote apoptosis in a p53/TP53-independent manner. Its function is as follows. Putative regulatory component of the chromatin remodeling INO80 complex which is involved in transcriptional regulation, DNA replication and probably DNA repair. This is TCF3 fusion partner (TFPT) from Homo sapiens (Human).